Here is a 189-residue protein sequence, read N- to C-terminus: Adenylate kinase homolog MTH_1663 (189 aa).

ATP is bound at residue 12–20 (GVPGTGKTT).

This sequence belongs to the archaeal adenylate kinase family.

The polypeptide is Adenylate kinase homolog MTH_1663 (Methanothermobacter thermautotrophicus (strain ATCC 29096 / DSM 1053 / JCM 10044 / NBRC 100330 / Delta H) (Methanobacterium thermoautotrophicum)).